The primary structure comprises 147 residues: Hemoglobin subunit delta (147 aa).

Residues 3–147 (HLTPEEKTAV…VANALAHKYH (145 aa)) form the Globin domain. Serine 51 bears the Phosphoserine mark. Heme b is bound by residues histidine 64 and histidine 93.

The protein belongs to the globin family. Heterotetramer of two delta chains and two alpha chains. In terms of tissue distribution, red blood cells.

The sequence is that of Hemoglobin subunit delta (HBD) from Gorilla gorilla gorilla (Western lowland gorilla).